The chain runs to 71 residues: Pro-MCH (71 aa).

Positions 1–20 (AKMNLSSYILILTFSLFSQG) are cleaved as a signal peptide.

Belongs to the melanin-concentrating hormone family.

The protein localises to the secreted. In Hylobates lar (Lar gibbon), this protein is Pro-MCH (PMCH).